Reading from the N-terminus, the 102-residue chain is Small ribosomal subunit protein uS10 (102 aa).

It belongs to the universal ribosomal protein uS10 family. Part of the 30S ribosomal subunit.

Functionally, involved in the binding of tRNA to the ribosomes. The protein is Small ribosomal subunit protein uS10 of Bacillus anthracis (strain A0248).